Consider the following 80-residue polypeptide: UPF0270 protein VFMJ11_0205 (80 aa).

Belongs to the UPF0270 family.

The sequence is that of UPF0270 protein VFMJ11_0205 from Aliivibrio fischeri (strain MJ11) (Vibrio fischeri).